Reading from the N-terminus, the 233-residue chain is Large ribosomal subunit protein uL1 (233 aa).

Belongs to the universal ribosomal protein uL1 family. Part of the 50S ribosomal subunit.

In terms of biological role, binds directly to 23S rRNA. The L1 stalk is quite mobile in the ribosome, and is involved in E site tRNA release. Protein L1 is also a translational repressor protein, it controls the translation of the L11 operon by binding to its mRNA. In Rhizobium etli (strain ATCC 51251 / DSM 11541 / JCM 21823 / NBRC 15573 / CFN 42), this protein is Large ribosomal subunit protein uL1.